We begin with the raw amino-acid sequence, 31 residues long: Nemertide alpha-7 (31 aa).

3 cysteine pairs are disulfide-bonded: C2/C16, C9/C20, and C15/C26. Residue P29 is modified to 4-hydroxyproline.

This sequence belongs to the nemertide family. In terms of tissue distribution, confined to the epidermis and to the mucus layer.

Its subcellular location is the secreted. In terms of biological role, potent toxin, demonstrating strong inhibitory effects on insect sodium channels (Nav) and reduced activity on mammalian sodium channels. Potently inhibits inactivation of insect sodium channels of B.germanica (BgNav1) (EC(50)=9.5 nM). The toxin also delays the inactivation of most mammalian Nav (human Nav1.1/SCN1A; EC(50)=171.5 nM, rat Nav1.2/SCN2A; EC(50)=50.4 nM, rat Nav1.3/SCN3A; EC(50)=170.2 nM, rat Nav1.4/SCN4A; EC(50)=810.6 nM, human Nav1.5/SCN5A; EC(50)=155.6 nM, mouse Nav1.6/SCN8A; EC(50)=147.6 nM, human Nav1.9/SCN9A; EC(50)=129 nM). Inactivation is completely prevented by a concentration of 1 uM, resulting in sustained, non-inactivating currents. In addition, the toxin significantly enhances the recovery from inactivation, and the open state is not required for the toxin to interact with the channel. In vivo, injection into brine shrimp (Artemia salina) stops movement or causes death after 24 hours (EC(50)=6.1 uM). This Lineus ruber (Red bootlace) protein is Nemertide alpha-7.